The chain runs to 489 residues: Membrane-bound lytic murein transglycosylase F (489 aa).

The signal sequence occupies residues 1-32 (MFALTAYRLRCAAWLLATGIFLLLAGCSEAKA). The non-LT domain stretch occupies residues 33–268 (PTALERVQKE…RLKDRYYGHV (236 aa)). The segment at 269–489 (DVLGYVGAYT…PEEDSGDEKL (221 aa)) is LT domain. Glutamate 315 is an active-site residue. The disordered stretch occupies residues 466 to 489 (AESGLHLPGVNKTRPEEDSGDEKL). Basic and acidic residues predominate over residues 478-489 (TRPEEDSGDEKL).

In the N-terminal section; belongs to the bacterial solute-binding protein 3 family. It in the C-terminal section; belongs to the transglycosylase Slt family.

It is found in the cell outer membrane. It carries out the reaction Exolytic cleavage of the (1-&gt;4)-beta-glycosidic linkage between N-acetylmuramic acid (MurNAc) and N-acetylglucosamine (GlcNAc) residues in peptidoglycan, from either the reducing or the non-reducing ends of the peptidoglycan chains, with concomitant formation of a 1,6-anhydrobond in the MurNAc residue.. Murein-degrading enzyme that degrades murein glycan strands and insoluble, high-molecular weight murein sacculi, with the concomitant formation of a 1,6-anhydromuramoyl product. Lytic transglycosylases (LTs) play an integral role in the metabolism of the peptidoglycan (PG) sacculus. Their lytic action creates space within the PG sacculus to allow for its expansion as well as for the insertion of various structures such as secretion systems and flagella. The protein is Membrane-bound lytic murein transglycosylase F of Pseudomonas aeruginosa (strain UCBPP-PA14).